Reading from the N-terminus, the 559-residue chain is Tryprostatin B 6-hydroxylase (559 aa).

The next 3 helical transmembrane spans lie at 13–35 (PSVM…HLSY), 48–65 (YVRF…LLYA), and 82–104 (VSLL…RTLF). Residue cysteine 502 participates in heme binding.

The protein belongs to the cytochrome P450 family. It depends on heme as a cofactor.

The protein localises to the membrane. The catalysed reaction is tryprostatin B + reduced [NADPH--hemoprotein reductase] + O2 = 6-hydroxytryprostatin B + oxidized [NADPH--hemoprotein reductase] + H2O + H(+). The protein operates within mycotoxin biosynthesis. In terms of biological role, cytochrome P450 monooxygenase; part of the gene cluster that mediates the biosynthesis of fumitremorgins, indole alkaloids that carry not only intriguing chemical structures, but also interesting biological and pharmacological activities. The biosynthesis of fumitremorgin-type alkaloids begins by condensation of the two amino acids L-tryptophan and L-proline to brevianamide F, catalyzed by the non-ribosomal peptide synthetase ftmA. Brevianamide F is then prenylated by the prenyltransferase ftmPT1/ftmB in the presence of dimethylallyl diphosphate, resulting in the formation of tryprostatin B. The three cytochrome P450 monooxygenases, ftmP450-1/ftmC, ftmP450-2/ftmE and ftmP450-3/FtmG, are responsible for the conversion of tryprostatin B to 6-hydroxytryprostatin B, tryprostatin A to fumitremorgin C and fumitremorgin C to 12,13-dihydroxyfumitremorgin C, respectively. The putative methyltransferase ftmMT/ftmD is expected for the conversion of 6-hydroxytryprostatin B to tryprostatin A. FtmPT2/FtmH catalyzes the prenylation of 12,13-dihydroxyfumitre-morgin C in the presence of dimethylallyl diphosphate, resulting in the formation of fumitremorgin B. Fumitremorgin B is further converted to verruculogen by ftmOx1/ftmF via the insertion of an endoperoxide bond between the two prenyl moieties. In some fungal species, verruculogen is further converted to fumitremorgin A, but the enzymes involved in this step have not been identified yet. This is Tryprostatin B 6-hydroxylase from Aspergillus fumigatus (Neosartorya fumigata).